Reading from the N-terminus, the 149-residue chain is Transcriptional repressor NrdR (149 aa).

A zinc finger lies at 3–34; sequence CPFCQSDDTKVLDTRLIDDGSQVRRRRECVSC. The ATP-cone domain maps to 49-139; sequence PHLIKSDDSR…VYRQFQDIEA (91 aa).

Belongs to the NrdR family. The cofactor is Zn(2+).

Functionally, negatively regulates transcription of bacterial ribonucleotide reductase nrd genes and operons by binding to NrdR-boxes. The chain is Transcriptional repressor NrdR from Ruthia magnifica subsp. Calyptogena magnifica.